The chain runs to 220 residues: Deoxyribose-phosphate aldolase (220 aa).

Asp89 functions as the Proton donor/acceptor in the catalytic mechanism. Lys151 functions as the Schiff-base intermediate with acetaldehyde in the catalytic mechanism. Lys180 functions as the Proton donor/acceptor in the catalytic mechanism.

Belongs to the DeoC/FbaB aldolase family. DeoC type 1 subfamily.

The protein resides in the cytoplasm. It carries out the reaction 2-deoxy-D-ribose 5-phosphate = D-glyceraldehyde 3-phosphate + acetaldehyde. The protein operates within carbohydrate degradation; 2-deoxy-D-ribose 1-phosphate degradation; D-glyceraldehyde 3-phosphate and acetaldehyde from 2-deoxy-alpha-D-ribose 1-phosphate: step 2/2. Its function is as follows. Catalyzes a reversible aldol reaction between acetaldehyde and D-glyceraldehyde 3-phosphate to generate 2-deoxy-D-ribose 5-phosphate. This Thermus thermophilus (strain ATCC BAA-163 / DSM 7039 / HB27) protein is Deoxyribose-phosphate aldolase.